A 460-amino-acid chain; its full sequence is Alpha-amylase (460 aa).

The first 21 residues, 1 to 21 (MASRTLSGALALAAAATAVLA), serve as a signal peptide directing secretion. Residues N121, Q167, and D176 each coordinate Ca(2+). Catalysis depends on D206, which acts as the Nucleophile. H210 lines the Ca(2+) pocket. E233 acts as the Proton donor in catalysis.

Belongs to the glycosyl hydrolase 13 family. Monomer. Ca(2+) serves as cofactor.

The enzyme catalyses Endohydrolysis of (1-&gt;4)-alpha-D-glucosidic linkages in polysaccharides containing three or more (1-&gt;4)-alpha-linked D-glucose units.. This Streptomyces thermoviolaceus protein is Alpha-amylase (amy).